The chain runs to 1407 residues: DNA-directed RNA polymerase subunit beta' (1407 aa).

Zn(2+) is bound by residues Cys70, Cys72, Cys85, and Cys88. Mg(2+) is bound by residues Asp460, Asp462, and Asp464. Lys972 is subject to N6-acetyllysine.

It belongs to the RNA polymerase beta' chain family. The RNAP catalytic core consists of 2 alpha, 1 beta, 1 beta' and 1 omega subunit. When a sigma factor is associated with the core the holoenzyme is formed, which can initiate transcription. It depends on Mg(2+) as a cofactor. Requires Zn(2+) as cofactor.

The catalysed reaction is RNA(n) + a ribonucleoside 5'-triphosphate = RNA(n+1) + diphosphate. Functionally, DNA-dependent RNA polymerase catalyzes the transcription of DNA into RNA using the four ribonucleoside triphosphates as substrates. The chain is DNA-directed RNA polymerase subunit beta' from Escherichia coli O6:K15:H31 (strain 536 / UPEC).